The following is a 1236-amino-acid chain: Calcium-activated potassium channel subunit alpha-1 (1236 aa).

Gly residues predominate over residues 1 to 21 (MANGGGGGGGSSGGGGGGGGS). Residues 1-61 (MANGGGGGGG…SSSSSSSSSV (61 aa)) form a disordered region. Residues 1 to 86 (MANGGGGGGG…VPCDSRGQRM (86 aa)) are Extracellular-facing. Positions 39 to 60 (SSSSSSSSSSSSSSSSSSSSSS) are enriched in low complexity. A helical transmembrane segment spans residues 87 to 107 (WWAFLASSMVTFFGGLFIILL). Residues 108–178 (WRTLKYLWTV…MISAQTLTGR (71 aa)) are Cytoplasmic-facing. 3 S-palmitoyl cysteine lipidation sites follow: cysteine 118, cysteine 119, and cysteine 121. The chain crosses the membrane as a helical span at residues 179-199 (VLVVLVFALSIGALVIYFIDS). Residues 200–214 (SNPIESCQNFYKDFT) lie on the Extracellular side of the membrane. Residues 215–235 (LQIDMAFNVFFLLYFGLRFIA) form a helical membrane-spanning segment. Topologically, residues 236–239 (ANDK) are cytoplasmic. Residues 240–260 (LWFWLEVNSVVDFFTVPPVFV) form a helical membrane-spanning segment. Residues 261–264 (SVYL) are Extracellular-facing. The chain crosses the membrane as a helical span at residues 265 to 285 (NRSWLGLRFLRALRLIQFSEI). The Cytoplasmic portion of the chain corresponds to 286-300 (LQFLNILKTSNSIKL). Residues 301-321 (VNLLSIFISTWLTAAGFIHLV) form a helical membrane-spanning segment. The Extracellular portion of the chain corresponds to 322–335 (ENSGDPWENFQNNQ). Residues 336–358 (ALTYWECVYLLMVTMSTVGYGDV) constitute an intramembrane region (pore-forming). The Selectivity for potassium motif lies at 352–355 (TVGY). At 359–367 (YAKTTLGRL) the chain is on the extracellular side. A helical transmembrane segment spans residues 368-388 (FMVFFILGGLAMFASYVPEII). Residues 389–1236 (ELIGNRKKYG…KQKYVQEERL (848 aa)) lie on the Cytoplasmic side of the membrane. Residues 407–549 (RKHIVVCGHI…WNWKEGDDAI (143 aa)) form the RCK N-terminal 1 domain. Glutamate 439, glutamine 462, and glutamate 464 together coordinate Mg(2+). The interval 556–576 (LGFIAQSCLAQGLSTMLANLF) is segment S7. The segment S8 stretch occupies residues 613–633 (LSFPTVCELCFVKLKLLMIAI). Positions 677–681 (CKACH) are heme-binding motif. The tract at residues 757–787 (EDEQPSTLSPKKKQRNGGMRNSPNTSPKLMR) is disordered. Threonine 763 carries the phosphothreonine modification. Residues serine 765, serine 778, and serine 782 each carry the phosphoserine modification. Residues 837–857 (VLSGHVVVCIFGDVSSALIGL) form a segment S9 region. One can recognise an RCK N-terminal 2 domain in the interval 839–983 (SGHVVVCIFG…MDRSSPDNSP (145 aa)). Threonine 970 carries the post-translational modification Phosphothreonine. Phosphoserine occurs at positions 978 and 982. A Calcium bowl motif is present at residues 1003 to 1025 (TELVNDTNVQFLDQDDDDDPDTE). Positions 1012, 1015, 1018, and 1020 each coordinate Ca(2+). A segment S10 region spans residues 1032-1052 (FACGTAFAVSVLDSLMSATYF). Residues 1186–1211 (RASLSHSSHSSQSSSKKSSSVHSIPS) show a composition bias toward low complexity. Residues 1186-1236 (RASLSHSSHSSQSSSKKSSSVHSIPSTANRQNRPKSRESRDKQKYVQEERL) are disordered. Positions 1220–1236 (KSRESRDKQKYVQEERL) are enriched in basic and acidic residues. Phosphoserine is present on residues serine 1221 and serine 1224.

The protein belongs to the potassium channel family. Calcium-activated (TC 1.A.1.3) subfamily. KCa1.1/KCNMA1 sub-subfamily. As to quaternary structure, homotetramer; which constitutes the calcium-activated potassium channel. Interacts with RAB11B. Interacts with beta subunits KCNMB1, KCNMB2, KCNMB3 and KCNMB4. Interacts with gamma subunits LRRC26, LRRC38, LRRC52 and LRRC55. Beta and gamma subunits are accessory, and modulate its activity. In terms of processing, phosphorylated. Phosphorylation by kinases such as PKA and/or PKG. In smooth muscles, phosphorylation affects its activity. Post-translationally, palmitoylation by ZDHHC22 and ZDHHC23 within the intracellular linker between the S0 and S1 transmembrane domains regulates localization to the plasma membrane. Depalmitoylated by LYPLA1 and LYPLAL1, leading to retard exit from the trans-Golgi network. In terms of tissue distribution, widely expressed. Except in myocytes, it is almost ubiquitously expressed.

The protein resides in the cell membrane. The enzyme catalyses K(+)(in) = K(+)(out). Its activity is regulated as follows. Ethanol and carbon monoxide-bound heme increase channel activation. Heme inhibits channel activation. Its function is as follows. Potassium channel activated by both membrane depolarization or increase in cytosolic Ca(2+) that mediates export of K(+). It is also activated by the concentration of cytosolic Mg(2+). Its activation dampens the excitatory events that elevate the cytosolic Ca(2+) concentration and/or depolarize the cell membrane. It therefore contributes to repolarization of the membrane potential. Plays a key role in controlling excitability in a number of systems, such as regulation of the contraction of smooth muscle, the tuning of hair cells in the cochlea, regulation of transmitter release, and innate immunity. In smooth muscles, its activation by high level of Ca(2+), caused by ryanodine receptors in the sarcoplasmic reticulum, regulates the membrane potential. In cochlea cells, its number and kinetic properties partly determine the characteristic frequency of each hair cell and thereby helps to establish a tonotopic map. Kinetics of KCNMA1 channels are determined by alternative splicing, phosphorylation status and its combination with modulating beta subunits. Highly sensitive to both iberiotoxin (IbTx) and charybdotoxin (CTX). Possibly induces sleep when activated by melatonin and through melatonin receptor MTNR1A-dependent dissociation of G-beta and G-gamma subunits, leading to increased sensitivity to Ca(2+) and reduced synaptic transmission. Potassium channel activated by both membrane depolarization or increase in cytosolic Ca(2+) that mediates export of K(+). The chain is Calcium-activated potassium channel subunit alpha-1 from Homo sapiens (Human).